The primary structure comprises 337 residues: Transaldolase (337 aa).

A Nuclear localization signal motif is present at residues 1-10 (MSGSPVKRQR). Lys115 carries the post-translational modification N6-acetyllysine. The active-site Schiff-base intermediate with substrate is the Lys142. An N6-acetyllysine modification is found at Lys219. Phosphoserine occurs at positions 237 and 256. An N6-acetyllysine mark is found at Lys269, Lys286, and Lys321.

Belongs to the transaldolase family. Type 1 subfamily. Homodimer. Interacts with KPNA1 and KPNA4.

Its subcellular location is the nucleus. The protein localises to the cytoplasm. The catalysed reaction is D-sedoheptulose 7-phosphate + D-glyceraldehyde 3-phosphate = D-erythrose 4-phosphate + beta-D-fructose 6-phosphate. It participates in carbohydrate degradation; pentose phosphate pathway; D-glyceraldehyde 3-phosphate and beta-D-fructose 6-phosphate from D-ribose 5-phosphate and D-xylulose 5-phosphate (non-oxidative stage): step 2/3. Functionally, catalyzes the rate-limiting step of the non-oxidative phase in the pentose phosphate pathway. Catalyzes the reversible conversion of sedheptulose-7-phosphate and D-glyceraldehyde 3-phosphate into erythrose-4-phosphate and beta-D-fructose 6-phosphate. The sequence is that of Transaldolase (Taldo1) from Rattus norvegicus (Rat).